We begin with the raw amino-acid sequence, 219 residues long: Nodulation protein NolA (219 aa).

The HTH merR-type domain maps to arginine 10 to glycine 79. A DNA-binding region (H-T-H motif) is located at residues isoleucine 13 to histidine 32.

Involved in genotype-specific nodulation of soybeans. The protein is Nodulation protein NolA (nolA) of Bradyrhizobium elkanii.